A 395-amino-acid chain; its full sequence is Cation channel sperm-associated protein 3 (395 aa).

Residues M1–K48 lie on the Cytoplasmic side of the membrane. The chain crosses the membrane as a helical span at residues S49 to T71. The Extracellular portion of the chain corresponds to N72–F80. A helical membrane pass occupies residues R81–I107. Position 108 (T108) is a topological domain, cytoplasmic. A helical transmembrane segment spans residues Y109–L131. Over R132–H143 the chain is Extracellular. The chain crosses the membrane as a helical span at residues F144–S160. Residues R161–I168 are Cytoplasmic-facing. The chain crosses the membrane as a helical span at residues A169–G195. The Extracellular portion of the chain corresponds to F196–A216. Positions F217–L236 form an intramembrane region, helical; Pore-forming. Over D237–T242 the chain is Extracellular. A helical transmembrane segment spans residues V243–I268. At M269 to S395 the chain is on the cytoplasmic side.

This sequence belongs to the cation channel sperm-associated (TC 1.A.1.19) family. In terms of assembly, component of the CatSper complex or CatSpermasome composed of the core pore-forming members CATSPER1, CATSPER2, CATSPER3 and CATSPER4 as well as auxiliary members CATSPERB, CATSPERG2, CATSPERD, CATSPERE, CATSPERZ, C2CD6/CATSPERT, SLCO6C1, TMEM249, TMEM262 and EFCAB9. HSPA1 may be an additional auxiliary complex member. The core complex members CATSPER1, CATSPER2, CATSPER3 and CATSPER4 form a heterotetrameric channel. The auxiliary CATSPERB, CATSPERG2, CATSPERD and CATSPERE subunits form a pavilion-like structure over the pore which stabilizes the complex through interactions with CATSPER4, CATSPER3, CATSPER1 and CATSPER2 respectively. SLCO6C1 interacts with CATSPERE and TMEM262/CATSPERH interacts with CATSPERB, further stabilizing the complex. C2CD6/CATSPERT interacts at least with CATSPERD and is required for targeting the CatSper complex in the flagellar membrane. As to expression, testis-specific.

It is found in the cell projection. The protein resides in the cilium. Its subcellular location is the flagellum membrane. The catalysed reaction is Ca(2+)(in) = Ca(2+)(out). With respect to regulation, in contrast to the human ortholog, not activated by progesterone. Activated by intracellular alkalinization. Pore-forming subunit of the CatSper complex, a sperm-specific voltage-gated calcium channel that plays a central role in sperm cell hyperactivation. Controls calcium entry to mediate the hyperactivated motility, a step needed for sperm motility which is essential late in the preparation of sperm for fertilization. This chain is Cation channel sperm-associated protein 3 (Catsper3), found in Mus musculus (Mouse).